The following is a 553-amino-acid chain: HTH-type transcriptional regulator SgrR (553 aa).

Positions 1–117 (MPSSRLQQQF…LSQIERRFRQ (117 aa)) constitute an HTH marR-type domain. Positions 26–49 (LQELANVLHCSKRHIRSLLNNMQK) form a DNA-binding region, H-T-H motif. The solute-binding stretch occupies residues 163-494 (EPEADLAHHW…NDLSKEVSQW (332 aa)).

Its function is as follows. Activates the small RNA gene sgrS under glucose-phosphate stress conditions as well as yfdZ. Represses its own transcription under both stress and non-stress conditions. Might act as a sensor of the intracellular accumulation of phosphoglucose by binding these molecules in its C-terminal solute-binding domain. This Photorhabdus laumondii subsp. laumondii (strain DSM 15139 / CIP 105565 / TT01) (Photorhabdus luminescens subsp. laumondii) protein is HTH-type transcriptional regulator SgrR.